We begin with the raw amino-acid sequence, 366 residues long: GTP-binding protein 10 (366 aa).

An Obg domain is found at 13–148 (GNFIDNLRIF…RIVHLDLKVI (136 aa)). Residues 149-344 (ADVGLVGFPN…LKSCIRKALD (196 aa)) form the OBG-type G domain. GTP-binding positions include 155-162 (GFPNAGKS), 202-206 (DLPGL), and 278-281 (NKMD). The span at 346–355 (QDGKESDAHR) shows a compositional bias: basic and acidic residues. Residues 346-366 (QDGKESDAHRSKQLLNLQSSS) are disordered.

This sequence belongs to the TRAFAC class OBG-HflX-like GTPase superfamily. OBG GTPase family.

The protein resides in the nucleus. It localises to the nucleolus. In terms of biological role, may be involved in the ribosome maturation process. This chain is GTP-binding protein 10 (Gtpbp10), found in Mus musculus (Mouse).